Reading from the N-terminus, the 151-residue chain is Transcriptional regulator MraZ (151 aa).

2 SpoVT-AbrB domains span residues 7–53 (EYDC…SQTE) and 82–125 (INEV…SPDL).

It belongs to the MraZ family. Forms oligomers.

Its subcellular location is the cytoplasm. It localises to the nucleoid. In Cytophaga hutchinsonii (strain ATCC 33406 / DSM 1761 / CIP 103989 / NBRC 15051 / NCIMB 9469 / D465), this protein is Transcriptional regulator MraZ.